The following is a 480-amino-acid chain: Proline--tRNA ligase (480 aa).

It belongs to the class-II aminoacyl-tRNA synthetase family. ProS type 3 subfamily. In terms of assembly, homodimer.

The protein resides in the cytoplasm. It carries out the reaction tRNA(Pro) + L-proline + ATP = L-prolyl-tRNA(Pro) + AMP + diphosphate. Catalyzes the attachment of proline to tRNA(Pro) in a two-step reaction: proline is first activated by ATP to form Pro-AMP and then transferred to the acceptor end of tRNA(Pro). This is Proline--tRNA ligase from Methanosarcina mazei (strain ATCC BAA-159 / DSM 3647 / Goe1 / Go1 / JCM 11833 / OCM 88) (Methanosarcina frisia).